The primary structure comprises 238 residues: MALETLTSPRLSSPMPTLFQDSALGFHGSKGKRSKRSRSEFDRQSLTEDEYIALCLMLLARDGDRNRDLDLPSSSSSPPLLPPLPTPIYKCSVCDKAFSSYQALGGHKASHRKSFSLTQSAGGDELSTSSAITTSGISGGGGGSVKSHVCSICHKSFATGQALGGHKRCHYEGKNGGGVSSSVSNSEDVGSTSHVSSGHRGFDLNIPPIPEFSMVNGDEEVMSPMPAKKLRFDFPEKP.

Residues 1–15 show a composition bias toward polar residues; the sequence is MALETLTSPRLSSPM. A disordered region spans residues 1 to 42; that stretch reads MALETLTSPRLSSPMPTLFQDSALGFHGSKGKRSKRSRSEFD. A Nuclear localization signal motif is present at residues 30 to 38; that stretch reads KGKRSKRSR. 2 C2H2-type zinc fingers span residues 89–111 and 148–170; these read YKCSVCDKAFSSYQALGGHKASH and HVCSICHKSFATGQALGGHKRCH. Positions 175–202 are disordered; it reads NGGGVSSSVSNSEDVGSTSHVSSGHRGF. Residues 180–193 are compositionally biased toward low complexity; the sequence is SSSVSNSEDVGSTS.

Its subcellular location is the nucleus. Its function is as follows. Probable transcription factor that regulates root development and phosphate (Pi) acquisition and homeostasis. Probably acts as a repressor of primary root growth and regulates Pi homeostasis through the control of root architecture. The polypeptide is Zinc finger protein ZAT6 (ZAT6) (Arabidopsis thaliana (Mouse-ear cress)).